The sequence spans 2430 residues: MDTGDTALGQKATSRSGETDSVSGRWRQEQSAVLKMSTFSSQEGPRQPQIDPEQIGNAASAQLFGSGKLASPGEGLHQVTEKQYPPHRPSPYPCQHSLSFPQHSLSQGMTHSHKPHQSLEGPPWLFPGPLPSVASEDLFPFPMHGHSGGYPRKKISNLNPAYSQYSQKSIEQAEDAHKKEHKPKKPGKYICPYCSRACAKPSVLKKHIRSHTGERPYPCIPCGFSFKTKSNLYKHRKSHAHAIKAGLVPFTESSVSKLDLEAGFIDVEAEIHSDGEQSTDTDEESSLFAEASDKVSPGPPVPLDIASRGGYHGSLEESLGGPMKVPILIIPKSGIPLASEGSQYLSSEMLPNPSLNAKADDSHTVKQKLALRLSEKKGQDSEPSLNLLSPHSKGSTDSGYFSRSESAEQQISPPNTNAKSYEEIIFGKYCRLSPRNTLSVTPTGQERTAMGRRGIMEPLPHLNTRLEVKMFEDPISQLNPSKGEMDPGQINMLKTTKFNSECRQPQAIPSSVRNEGKPYPGNFLGSNPMLLEAPVDSSPLIRSNSMPTSSATNLSVPPSLRGSHSFDERMTGSDDVFYPGTVGIPPQRMLRRQAAFELPSVQEGHMESEHPARVSKGLASPSLKEKKLLPGDRPGYDYDVCRKPYKKWEDSETLKQSYLGSFKQGGEYFMDPSVPVQGVPTMFGTTCENRKRRKEKSVGDEEDVPMICGGMGNAPVGMMSSEYDPKLQDGGRSGFAMTAHESLAHGHSDRLDPARPQLPSRSPSLGSEDLPLAADPDKMTDLGKKPPGNVISVIQHTNSLSRPNSFERSESTEMVACPQDKTPSPAETCDSEVLEAPVSPEWAPPGDGGESGSKPTPSQQVPQHSYHAQPRLVRQHNIQVPEIRVTEEPDKPEKEKEAPTKEPEKPVEEFQWPQRSETLSQLPAEKLPPKKKRLRLADLEHSSGESSFESTGTGLSRSPSQESNLSHSSSFSMSFDREETVKLTAPPKQDESGKHSEFLTVPAGSYSLSVPGHHHQKEMRRCSSEQMPCPHPTEVPEIRSKSFDYGNLSHAPVAGTSPSTLSPSRERKKCFLVRQASFSGSPEIAQGEAGVDPSVKQEHMEHLHAGLRAAWSSVLPPLPGDDPGKQVGTCGPLSSGPPLHLTQQQIMHMDSQESLRNPLIQPTSYMTSKHLPEQPHLFPHQDAVPFSPIQNALFQFQYPTVCMVHLPAQQPPWWQTHFPHPFAPHPQNSYSKPPFQADLHSSYPLEHVAEHTGKKSADYPHAKEQTYPCYSGTSGLHSKNLPLKFPSDPGSKSTETPTEQLLREDFASENAGPLQSLPGTVVPVRIQTHVPSYGSVMYTSISQILGQNSPAIVICKVDENMTQRTLVTNAAMQGIGLNIAQVLGQHTGLEKYPLWKVPQTLPLGLESSIPLCLPSTSDNAASLGGSKRMLSPASSLELFMETKQQKRVKEEKMYGQIVEELSAVELTNSDIKKGLSRPQKPQLVRQGCASEPKDGCFQSRSSSFSSLSPSSSQDHPSASGPFPPNREILPGSRAPPRRKFSGPSESRESSDELDMDETSSDMSMSPQSSALPTGGGQQEEEGKARKLPVSMLVHMASGPGGNVANSTLLFTDVADFQQILQFPSLRTTTTVSWCFLNYTKPSFVQQATFKSSVYASWCISSCNPNPSGLNTKTTLALLRSKQKITAEIYTLAAMHRPGAGKLTSSSVWKQFAQMKPDAPFLFGNKLERKLAGNVLKERGKGEIHGDKDLGSKQTEPIRIKIFEGGYKSNEDYVYVRGRGRGKYICEECGIRCKKPSMLKKHIRTHTDVRPYVCKLCNFAFKTKGNLTKHMKSKAHMKKCLELGVSMTSVDDTETEEAENMEELHKTSEKHSMSGISTDHQFSDAEESDGEDGDDNDDDDEDDDDFDDQGDLTPKTRSRSTSPQPPRFSSLPVNVGAVAHGVPSDSSLGHSSLISYLVTLPSIQVTQLMTPSDSCDDTQMTEYQRLFQSKSTDSEPDKDRLDIPSSMDEEAMLSSEPSSSPRDFSPSSYRSSPGYDSSPCRDNSPKRYLIPKGDLSPRRHLSPRRDLSPMRHLSPRKEAALRREMSQGDASPRRHLSPRRPLSPGKDITARRDLSPRRERRYMTTIRAPSPRRALYPNPPLSMGQYLQTEPIVLGPPNLRRGIPQVPYFSLYGDQEGAYEHHGSSLFPEGPTDYVFSHLPLHSQQQVRAPIPMVPVGGIQMVHSLPPALSGLHPPPTLPLPTEGSEEKKGAPGEAFAKDPYILSRRHEKQAPQVLQSSGLPSSPSSPRLLMKQSTSEDSLNSTEREQEENIQTCTKAIASLRIATEEAALLGADPPTWVQESPQKPLESAHVSIRHFGGPEPGQPCTSAAHPDLHDGEKDTFGTSQTAVAHPTFYSKSSVDEKRVDFQSSKELSLSTEEGNEPSPEKNQLH.

The interval 1–127 is disordered; sequence MDTGDTALGQ…SLEGPPWLFP (127 aa). Polar residues-rich tracts occupy residues 11 to 22 and 96 to 110; these read KATSRSGETDSV and HSLS…QGMT. 2 consecutive C2H2-type zinc fingers follow at residues 189-211 and 217-239; these read YICP…IRSH and YPCI…RKSH. 3 disordered regions span residues 271–302, 374–418, and 744–995; these read IHSD…PPVP, SEKK…NTNA, and AHGH…SGKH. The span at 381 to 418 shows a compositional bias: polar residues; it reads SEPSLNLLSPHSKGSTDSGYFSRSESAEQQISPPNTNA. Basic and acidic residues-rich tracts occupy residues 744 to 753 and 775 to 784; these read AHGHSDRLDP and DPDKMTDLGK. The segment covering 792-804 has biased composition (polar residues); it reads SVIQHTNSLSRPN. Residue S811 is modified to Phosphoserine. A compositionally biased stretch (polar residues) spans 853-863; that stretch reads SKPTPSQQVPQ. Over residues 884 to 908 the composition is skewed to basic and acidic residues; the sequence is RVTEEPDKPEKEKEAPTKEPEKPVE. The Nuclear localization signal signature appears at 929–935; that stretch reads PKKKRLR. A phosphoserine mark is found at S942, S947, S1040, S1431, and S1435. Over residues 944–974 the composition is skewed to low complexity; it reads GESSFESTGTGLSRSPSQESNLSHSSSFSMS. The disordered stretch occupies residues 1472 to 1584; the sequence is KKGLSRPQKP…GGQQEEEGKA (113 aa). Composition is skewed to low complexity over residues 1499-1520 and 1560-1569; these read SRSS…SASG and SDMSMSPQSS. 2 consecutive C2H2-type zinc fingers follow at residues 1783-1805 and 1811-1835; these read YICE…IRTH and YVCK…SKAH. 2 disordered regions span residues 1848–1931 and 1986–2117; these read SVDD…SSLP and FQSK…SPRR. Positions 1850 to 1860 are enriched in acidic residues; that stretch reads DDTETEEAENM. A compositionally biased stretch (basic and acidic residues) spans 1861-1871; the sequence is EELHKTSEKHS. The segment covering 1883-1909 has biased composition (acidic residues); sequence DAEESDGEDGDDNDDDDEDDDDFDDQG. Basic and acidic residues predominate over residues 1991-2001; the sequence is TDSEPDKDRLD. Residues 2013-2037 are compositionally biased toward low complexity; the sequence is SSEPSSSPRDFSPSSYRSSPGYDSS. Repeat copies occupy residues 2037–2040, 2043–2046, 2055–2058, 2067–2070, 2073–2076, 2090–2093, 2096–2099, 2102–2105, 2114–2117, and 2129–2132. The 10 X 4 AA tandem repeats of S-P-[RGMKC]-[RK] stretch occupies residues 2037–2132; sequence SPCRDNSPKR…TTIRAPSPRR (96 aa). Residues 2062–2085 are compositionally biased toward basic and acidic residues; that stretch reads PRRDLSPMRHLSPRKEAALRREMS. S2102 bears the Phosphoserine mark. The span at 2107-2116 shows a compositional bias: basic and acidic residues; that stretch reads ITARRDLSPR. 3 disordered regions span residues 2226-2252, 2268-2309, and 2352-2430; these read PALS…GAPG, KQAP…QEEN, and SIRH…NQLH. Residues 2271–2289 are compositionally biased toward low complexity; that stretch reads PQVLQSSGLPSSPSSPRLL. A phosphoserine mark is found at S2281 and S2285. Positions 2291–2301 are enriched in polar residues; that stretch reads KQSTSEDSLNS. The span at 2371–2380 shows a compositional bias: basic and acidic residues; the sequence is PDLHDGEKDT. Residues 2406-2417 show a composition bias toward polar residues; sequence FQSSKELSLSTE. 2 positions are modified to phosphoserine: S2413 and S2415.

In terms of assembly, interacts with TCF4. In terms of tissue distribution, expressed in heart, lung, skeletal muscle and liver. In the brain expressed in cerebral cortex, hippocampus, corpora amygdala and cerebellar cortex.

The protein resides in the nucleus. Its function is as follows. Specifically binds to the DNA sequence 5'-GGGACTTTCC-3' which is found in the enhancer elements of numerous viral promoters such as those of SV40, CMV, or HIV1. In addition, related sequences are found in the enhancer elements of a number of cellular promoters, including those of the class I MHC, interleukin-2 receptor, somatostatin receptor II, and interferon-beta genes. It may act in T-cell activation. This chain is Transcription factor HIVEP2 (Hivep2), found in Mus musculus (Mouse).